Reading from the N-terminus, the 642-residue chain is Protein INCREASED PETAL GROWTH ANISOTROPY 1 (642 aa).

Residues 1–60 (MVAGKVRVTMGFHKSPSTKKTKDMPSPLPLPPPPPPPLKPPSSGSATTKPPINPSKPGFT) are disordered. Positions 26-40 (SPLPLPPPPPPPLKP) are enriched in pro residues. The stretch at 80-183 (AASHNGVVSE…EAEIVELRKL (104 aa)) forms a coiled coil. The tract at residues 223-351 (NLPEPITNQE…PPKSLSIASA (129 aa)) is disordered. Residues 247 to 256 (DIYRKDEIES) are compositionally biased toward basic and acidic residues. The span at 258–277 (SRSSNSEELTESSSLSTVRS) shows a compositional bias: low complexity. Residues 302 to 344 (DPPPQKSIPPPPPPPPPPLLQQPPPPPSVSKAPPPPPPPPPPK) show a composition bias toward pro residues.

It belongs to the IPGA1 family. In terms of assembly, associates to cortical microtubules via its N-terminal region. Interacts with ANGUSTIFOLIA (AN) on microtubule upon mechanical stress to regulate microtubule organization. Binds to the microtubule-severing enzyme KATANIN (KTN1). Expressed ubiquitously at all development stages, with highest in developing petals. During mechanical stress, accumulates in granules on microtubules.

It is found in the cytoplasm. Its subcellular location is the cytoskeleton. It localises to the cytosol. The protein resides in the cell membrane. Its function is as follows. Microtubule-associated protein involved in the regulation of anisotropic petal and cotyledons growth and shape by affecting cortical microtubule organization. Prevents cortical microtubules organization into parallel arrays oriented perpendicular to the axis of cell elongation thus limiting anisotropic cell growth in the late phases of petal development. Cooperatively with ANGUSTIFOLIA (AN), negatively regulates cortical microtubules (CMTs) organization in response to mechanical stress and modulates pavement cells morphogenesis leading to puzzle shape, probably in an AAA1/KTN1-dependent manner. The chain is Protein INCREASED PETAL GROWTH ANISOTROPY 1 from Arabidopsis thaliana (Mouse-ear cress).